The sequence spans 342 residues: MKALAKLERGPGLTLTRVKRPEVGHNDVLIKIRRTAICGTDIHIWKWDDWAQKTIPVPMHVGHEYVGEIVEMGQEVRGFAIGDRVSGEGHITCGFCRNCRAGRRHLCRNTVGVGVNREGAFAEYLAIPAFNAFKIPPEISDDLASIFDPFGNATHTALSFNLVGEDVLITGAGPIGIMAVAIAKHVGARNVVITDINDYRLELARKMGATRAVNVARESLRDVMADLHMTEGFDVGLEMSGVPSAFTSLLEAMNHGGKVALLGIPPAQTAIDWNQVIFKGLEIKGIYGREMFETWYKMVAMLQSGLDLSPIITHRFAADDYEQGFAAMLSGESGKVILDWTV.

Cysteine 38 contributes to the Zn(2+) binding site. Active-site charge relay system residues include threonine 40 and histidine 43. Histidine 63, glutamate 64, cysteine 93, cysteine 96, cysteine 99, and cysteine 107 together coordinate Zn(2+). NAD(+) is bound by residues isoleucine 175, aspartate 195, arginine 200, 262 to 264 (LGI), and 286 to 287 (IY).

Belongs to the zinc-containing alcohol dehydrogenase family. As to quaternary structure, homotetramer. Zn(2+) is required as a cofactor.

Its subcellular location is the cytoplasm. It carries out the reaction L-threonine + NAD(+) = (2S)-2-amino-3-oxobutanoate + NADH + H(+). Its pathway is amino-acid degradation; L-threonine degradation via oxydo-reductase pathway; glycine from L-threonine: step 1/2. Its function is as follows. Catalyzes the NAD(+)-dependent oxidation of L-threonine to 2-amino-3-ketobutyrate. The polypeptide is L-threonine 3-dehydrogenase (Burkholderia cenocepacia (strain ATCC BAA-245 / DSM 16553 / LMG 16656 / NCTC 13227 / J2315 / CF5610) (Burkholderia cepacia (strain J2315))).